The primary structure comprises 157 residues: 2-C-methyl-D-erythritol 2,4-cyclodiphosphate synthase (157 aa).

Residues aspartate 8 and histidine 10 each coordinate a divalent metal cation. 4-CDP-2-C-methyl-D-erythritol 2-phosphate-binding positions include 8-10 (DVH) and 34-35 (HS). Residue histidine 42 coordinates a divalent metal cation. Residues 56 to 58 (DIG), 61 to 65 (FPDTD), 100 to 106 (AQAPKMA), 132 to 135 (TTTE), phenylalanine 139, and arginine 142 contribute to the 4-CDP-2-C-methyl-D-erythritol 2-phosphate site.

This sequence belongs to the IspF family. In terms of assembly, homotrimer. It depends on a divalent metal cation as a cofactor.

The catalysed reaction is 4-CDP-2-C-methyl-D-erythritol 2-phosphate = 2-C-methyl-D-erythritol 2,4-cyclic diphosphate + CMP. It participates in isoprenoid biosynthesis; isopentenyl diphosphate biosynthesis via DXP pathway; isopentenyl diphosphate from 1-deoxy-D-xylulose 5-phosphate: step 4/6. Involved in the biosynthesis of isopentenyl diphosphate (IPP) and dimethylallyl diphosphate (DMAPP), two major building blocks of isoprenoid compounds. Catalyzes the conversion of 4-diphosphocytidyl-2-C-methyl-D-erythritol 2-phosphate (CDP-ME2P) to 2-C-methyl-D-erythritol 2,4-cyclodiphosphate (ME-CPP) with a corresponding release of cytidine 5-monophosphate (CMP). The sequence is that of 2-C-methyl-D-erythritol 2,4-cyclodiphosphate synthase from Azotobacter vinelandii (strain DJ / ATCC BAA-1303).